A 225-amino-acid chain; its full sequence is MANRIRLHIWGDYACFTRPEMKVERVSYDVITPSAARGILSAIHWKPAINWVIDKIYVLKPIRFESVRRNELGAKISESKVSGAMKRKSVADLYTVIEDDRQQRAATVLKDVAYVIEAHAVMTSKAGVDENTTKHIEMFKRRALKGQCFQQPCMGVREFPAHFALIDDNDPLPLSQLSESEFNRDLGWMLHDIDFEHGNTPHFFRAELKNGVIDVPPFYAEEVKR.

This sequence belongs to the CRISPR-associated protein Cas5 family. Subtype I-C/Dvulg subfamily. The cofactor is Does not require a metal cofactor..

In terms of biological role, CRISPR (clustered regularly interspaced short palindromic repeat) is an adaptive immune system that provides protection against mobile genetic elements (viruses, transposable elements and conjugative plasmids). CRISPR clusters contain spacers, sequences complementary to antecedent mobile elements, and target invading nucleic acids. CRISPR clusters are transcribed and processed into CRISPR RNA (crRNA). This protein is a sequence-specific endonuclease that cleaves pre-crRNA at G21 into mature crRNA. Does not cleave pre-crRNA associated with the T.thermophilus strain HB27 Cas5 protein (AC Q746C2) CRISPR locus. The reaction mechanism may proceed by an intramolecular attack of the 2'-hydroxyl group of G21 on the scissile phosphodiester, cutting the precursor 3' to G21 residue yielding 5'-hydroxyl and 2' and/or 3' ends lacking a hydroxyl group (perhaps a 2'/3' cyclic phosphodiester). The polypeptide is CRISPR pre-crRNA endoribonuclease Cas5d (Mannheimia succiniciproducens (strain KCTC 0769BP / MBEL55E)).